The following is a 357-amino-acid chain: Peptide chain release factor 1 (357 aa).

Glutamine 232 bears the N5-methylglutamine mark. Over residues 281 to 305 the composition is skewed to basic and acidic residues; the sequence is DRQHNEMAADRRSQVGSGDRSERIR. The disordered stretch occupies residues 281–309; it reads DRQHNEMAADRRSQVGSGDRSERIRTYNF.

It belongs to the prokaryotic/mitochondrial release factor family. In terms of processing, methylated by PrmC. Methylation increases the termination efficiency of RF1.

It localises to the cytoplasm. Its function is as follows. Peptide chain release factor 1 directs the termination of translation in response to the peptide chain termination codons UAG and UAA. This Nitratidesulfovibrio vulgaris (strain DSM 19637 / Miyazaki F) (Desulfovibrio vulgaris) protein is Peptide chain release factor 1.